We begin with the raw amino-acid sequence, 754 residues long: Lysyl oxidase homolog 3 (754 aa).

A signal peptide spans 1–26 (MRAVSVWYCCPWGLLLLHCLCSFSVG). SRCR domains lie at 45–146 (FRLA…VICK), 170–283 (VRLR…VSCV), 308–408 (VRLK…VRCN), and 418–526 (IRLS…VICS). Cystine bridges form between C71–C135, C84–C145, C115–C125, C202–C272, C215–C282, C249–C259, C333–C397, C346–C407, C377–C387, C447–C512, C460–C525, C493–C503, C555–C561, C607–C655, C639–C645, C667–C677, and C714–C728. N-linked (GlcNAc...) asparagine glycosylation occurs at N112. N267 carries an N-linked (GlcNAc...) asparagine glycan. 2 N-linked (GlcNAc...) asparagine glycosylation sites follow: N391 and N482. Positions 530–733 (SDLLLHSALV…WVHNCHIGDA (204 aa)) are lysyl-oxidase like. Residues H608, H610, and H612 each contribute to the Cu cation site. The N-linked (GlcNAc...) asparagine glycan is linked to N626. Positions 635–671 (KASFCLEDTECQEDVSKRYECANFGEQGITVGCWDLY) form a cross-link, lysine tyrosylquinone (Lys-Tyr). Residue Y671 is modified to 2',4',5'-topaquinone.

The protein belongs to the lysyl oxidase family. Cu cation is required as a cofactor. The cofactor is lysine tyrosylquinone residue. In terms of processing, the lysine tyrosylquinone cross-link (LTQ) is generated by condensation of the epsilon-amino group of a lysine with a topaquinone produced by oxidation of tyrosine. Expressed in palate: predominantly present in the palate mesenchyme and tongue (at protein level). In spine, expressed in the original intervertebral disk, cartilage primordia, anterior and posterior longitudinal ligaments, meninges of spinal cord, lung and heart. In eyes, strongly expressed in the skin of the eyelid and weakly expressed in the cornea and sclera. In lung, predominantly expressed in the pulmonary mesenchyme. In developing muscle, expressed at myofiber ends (at protein level).

It is found in the secreted. The protein localises to the extracellular space. Its subcellular location is the cytoplasm. The protein resides in the nucleus. The catalysed reaction is L-lysyl-[protein] + O2 + H2O = (S)-2-amino-6-oxohexanoyl-[protein] + H2O2 + NH4(+). It catalyses the reaction N(6)-acetyl-L-lysyl-[protein] + O2 + H2O = acetamide + (S)-2-amino-6-oxohexanoyl-[protein] + H2O2. Its function is as follows. Protein-lysine 6-oxidase that mediates the oxidation of peptidyl lysine residues to allysine in target proteins. Catalyzes the post-translational oxidative deamination of peptidyl lysine residues in precursors of elastin and different types of collagens, a prerequisite in the formation of cross-links between collagens and elastin. Required for somite boundary formation by catalyzing oxidation of fibronectin (FN1), enhancing integrin signaling in myofibers and their adhesion to the myotendinous junction (MTJ). Acts as a regulator of inflammatory response by inhibiting differentiation of naive CD4(+) T-cells into T-helper Th17 or regulatory T-cells (Treg): acts by interacting with STAT3 in the nucleus and catalyzing both deacetylation and oxidation of lysine residues on STAT3, leading to disrupt STAT3 dimerization and inhibit STAT3 transcription activity. Oxidation of lysine residues to allysine on STAT3 preferentially takes place on lysine residues that are acetylated. Also able to catalyze deacetylation of lysine residues on STAT3. In Mus musculus (Mouse), this protein is Lysyl oxidase homolog 3.